We begin with the raw amino-acid sequence, 22 residues long: Peptide PGLa-R1 (22 aa).

A Leucine amide modification is found at Leu22.

As to expression, expressed by the skin glands.

Its subcellular location is the secreted. In terms of biological role, antimicrobial peptide. This Xenopus ruwenzoriensis (Uganda clawed frog) protein is Peptide PGLa-R1.